We begin with the raw amino-acid sequence, 60 residues long: UPF0337 protein asr1134 (60 aa).

Composition is skewed to basic and acidic residues over residues 1–18 (MSLE…EGKA) and 29–60 (PEDK…KKID). The interval 1–60 (MSLEDRAKATGKNIEGKAQEALGNVTGDPEDKAEGKAKQAESEVRHGVEDVKDNVKKKID) is disordered.

It belongs to the UPF0337 (CsbD) family.

The protein is UPF0337 protein asr1134 of Nostoc sp. (strain PCC 7120 / SAG 25.82 / UTEX 2576).